A 62-amino-acid chain; its full sequence is Calmodulin regulator protein PCP4 (62 aa).

The disordered stretch occupies residues 1-39 (MSERQGAGATNGKDKTSGENDGQKKVQEEFDIDMDAPET). Over residues 12–28 (GKDKTSGENDGQKKVQE) the composition is skewed to basic and acidic residues. Residues 28 to 40 (EEFDIDMDAPETE) form an acidic; binds calcium and is required for modulating the calcium-binding kinetics of calmodulin region. One can recognise an IQ domain in the interval 39-62 (TERAAVAIQSQFRKFQKKKAGSQS).

Belongs to the PCP4 family. As to quaternary structure, binds to both calcium-free and calcium-bound calmodulin. The affinity for the calcium-bound form is 50-fold greater.

In terms of biological role, functions as a modulator of calcium-binding by calmodulin. Thereby, regulates calmodulin activity and the different processes it controls. For instance, may play a role in neuronal differentiation through activation of calmodulin-dependent kinase signaling pathways. This chain is Calmodulin regulator protein PCP4, found in Homo sapiens (Human).